The sequence spans 132 residues: Small ribosomal subunit protein uS8 (132 aa).

This sequence belongs to the universal ribosomal protein uS8 family. Part of the 30S ribosomal subunit. Contacts proteins S5 and S12.

Its function is as follows. One of the primary rRNA binding proteins, it binds directly to 16S rRNA central domain where it helps coordinate assembly of the platform of the 30S subunit. The polypeptide is Small ribosomal subunit protein uS8 (Clostridioides difficile (strain 630) (Peptoclostridium difficile)).